Consider the following 544-residue polypeptide: Chaperonin GroEL 1 (544 aa).

Residues 29 to 32, 86 to 90, Gly413, 479 to 481, and Asp495 contribute to the ATP site; these read TLGP, DGTTT, and NAA.

Belongs to the chaperonin (HSP60) family. As to quaternary structure, forms a cylinder of 14 subunits composed of two heptameric rings stacked back-to-back. Interacts with the co-chaperonin GroES.

Its subcellular location is the cytoplasm. The enzyme catalyses ATP + H2O + a folded polypeptide = ADP + phosphate + an unfolded polypeptide.. Its function is as follows. Together with its co-chaperonin GroES, plays an essential role in assisting protein folding. The GroEL-GroES system forms a nano-cage that allows encapsulation of the non-native substrate proteins and provides a physical environment optimized to promote and accelerate protein folding. The sequence is that of Chaperonin GroEL 1 from Trichormus variabilis (strain ATCC 29413 / PCC 7937) (Anabaena variabilis).